Reading from the N-terminus, the 393-residue chain is Outer membrane protein assembly factor BamB (393 aa).

A signal peptide spans 1-19; that stretch reads MQLRKTLLVGLVSVALLSG. A lipid anchor (N-palmitoyl cysteine) is attached at cysteine 20. Cysteine 20 carries S-diacylglycerol cysteine lipidation.

Belongs to the BamB family. Part of the Bam complex, which is composed of the outer membrane protein BamA, and four lipoproteins BamB, BamC, BamD and BamE.

Its subcellular location is the cell outer membrane. Part of the outer membrane protein assembly complex, which is involved in assembly and insertion of beta-barrel proteins into the outer membrane. The polypeptide is Outer membrane protein assembly factor BamB (Yersinia pestis).